The following is a 480-amino-acid chain: Probable glycine dehydrogenase (decarboxylating) subunit 2 (480 aa).

Lys265 bears the N6-(pyridoxal phosphate)lysine mark.

This sequence belongs to the GcvP family. C-terminal subunit subfamily. In terms of assembly, the glycine cleavage system is composed of four proteins: P, T, L and H. In this organism, the P 'protein' is a heterodimer of two subunits. Pyridoxal 5'-phosphate serves as cofactor.

The enzyme catalyses N(6)-[(R)-lipoyl]-L-lysyl-[glycine-cleavage complex H protein] + glycine + H(+) = N(6)-[(R)-S(8)-aminomethyldihydrolipoyl]-L-lysyl-[glycine-cleavage complex H protein] + CO2. In terms of biological role, the glycine cleavage system catalyzes the degradation of glycine. The P protein binds the alpha-amino group of glycine through its pyridoxal phosphate cofactor; CO(2) is released and the remaining methylamine moiety is then transferred to the lipoamide cofactor of the H protein. This is Probable glycine dehydrogenase (decarboxylating) subunit 2 from Thermosipho africanus (strain TCF52B).